We begin with the raw amino-acid sequence, 304 residues long: uncharacterized protein (304 aa).

Residues 1 to 183 (MTAPNEPGAL…ARVQLSARRS (183 aa)) form a disordered region. Residues 132–166 (PTPRAPQRNPAPARPAEGGAGSRGDSAAGSSGGRS) are compositionally biased toward low complexity. 2 helical membrane-spanning segments follow: residues 206-226 (LLLS…LYLV) and 265-285 (FLIG…GAFV).

It to M.leprae ML0007.

Its subcellular location is the cell membrane. This is an uncharacterized protein from Mycobacterium tuberculosis (strain ATCC 25618 / H37Rv).